Here is a 170-residue protein sequence, read N- to C-terminus: Fimbrial protein (170 aa).

Residues 1-7 (MNTLQKG) constitute a propeptide that is removed on maturation. At Phe-8 the chain carries N-methylphenylalanine. The helical transmembrane segment at 8 to 28 (FTLIELMIVIAIVGILAAVAL) threads the bilayer. O-linked (Gal...) serine glycosylation is present at Ser-70. An O-(sn-1-glycerophosphoryl)serine modification is found at Ser-100. Cys-127 and Cys-163 are disulfide-bonded.

This sequence belongs to the N-Me-Phe pilin family. As to quaternary structure, the pili are polar flexible filaments of about 5.4 nanometers diameter and 2.5 micrometers average length; they consist of only a single polypeptide chain arranged in a helical configuration of five subunits per turn in the assembled pilus. O-linked glycan consists of GlcNAc-Gal disaccharide.

Its subcellular location is the fimbrium. The protein resides in the membrane. Its function is as follows. Major component of the type IV pilus (T4P) that plays a role in cellular adherence, microcolony formation as well as twitching motility. The chain is Fimbrial protein (pilE) from Neisseria meningitidis serogroup A / serotype 4A (strain DSM 15465 / Z2491).